A 95-amino-acid chain; its full sequence is Integration host factor subunit beta (95 aa).

Belongs to the bacterial histone-like protein family. Heterodimer of an alpha and a beta chain.

This protein is one of the two subunits of integration host factor, a specific DNA-binding protein that functions in genetic recombination as well as in transcriptional and translational control. This Shewanella pealeana (strain ATCC 700345 / ANG-SQ1) protein is Integration host factor subunit beta.